Consider the following 172-residue polypeptide: Glutamyl-tRNA(Gln) amidotransferase subunit C-4, mitochondrial (172 aa).

The transit peptide at 1 to 23 directs the protein to the mitochondrion; that stretch reads MIRIPFHLRQTPGRTLHSLVRSF. The tract at residues 51–73 is disordered; sequence PSKVPQRPHKSTIDGQSTPTRIP.

The protein belongs to the GatC family. As to quaternary structure, subunit of the heterotrimeric GatCAB amidotransferase (AdT) complex, composed of A, B and C subunits.

The protein resides in the mitochondrion. It catalyses the reaction L-glutamyl-tRNA(Gln) + L-glutamine + ATP + H2O = L-glutaminyl-tRNA(Gln) + L-glutamate + ADP + phosphate + H(+). Allows the formation of correctly charged Gln-tRNA(Gln) through the transamidation of misacylated Glu-tRNA(Gln) in the mitochondria. The reaction takes place in the presence of glutamine and ATP through an activated gamma-phospho-Glu-tRNA(Gln). The sequence is that of Glutamyl-tRNA(Gln) amidotransferase subunit C-4, mitochondrial from Culex quinquefasciatus (Southern house mosquito).